A 340-amino-acid polypeptide reads, in one-letter code: MTFFEQVRRLRSAATTLPRRLAIAAMGAVLVYGLVGTFGGPATAGAFSRPGLPVEYLQVPSASMGRDIKVQFQGGGPHAVYLLDGLRAQDDYNGWDINTPAFEEYYQSGLSVIMPVGGQSSFYTDWYQPSQSNGQNYTYKWETFLTREMPAWLQANKGVSPTGNAAVGLSMSGGSALILAAYYPQQFPYAASLSGFLNPSEGWWPTLIGLAMNDSGGYNANSMWGPSSDPAWKRNDPMVQIPRLVANNTRIWVYCGNGTPSDLGGDNIPAKFLEGLTLRTNQTFRDTYAADGGRNGVFNFPPNGTHSWPYWNEQLVAMKADIQHVLNGATPPAAPAAPAA.

Positions 1–45 are cleaved as a signal peptide; sequence MTFFEQVRRLRSAATTLPRRLAIAAMGAVLVYGLVGTFGGPATAG. 86 to 87 serves as a coordination point for substrate; that stretch reads LR. The fibronectin-binding stretch occupies residues 102 to 112; it reads FEEYYQSGLSV. Substrate-binding residues include Ser-170 and Asn-198. Residue Ser-170 is the Nucleophile of the active site. The active site involves Glu-274. Residues 276–279 and 306–308 each bind substrate; these read LTLR and HSW. His-306 is a catalytic residue.

It belongs to the mycobacterial A85 antigen family. As to quaternary structure, homodimer.

The protein resides in the secreted. The catalysed reaction is an acyl-CoA + a 1,2-diacyl-sn-glycerol = a triacyl-sn-glycerol + CoA. The enzyme catalyses 2 alpha,alpha'-trehalose 6-mycolate = alpha,alpha'-trehalose 6,6'-bismycolate + alpha,alpha-trehalose. In terms of biological role, the antigen 85 proteins (FbpA, FbpB, FbpC) are responsible for the high affinity of mycobacteria to fibronectin, a large adhesive glycoprotein, which facilitates the attachment of M.tuberculosis to murine alveolar macrophages (AMs). They also help to maintain the integrity of the cell wall by catalyzing the transfer of mycolic acids to cell wall arabinogalactan and through the synthesis of alpha,alpha-trehalose dimycolate (TDM, cord factor). They catalyze the transfer of a mycoloyl residue from one molecule of alpha,alpha-trehalose monomycolate (TMM) to another TMM, leading to the formation of TDM. The sequence is that of Diacylglycerol acyltransferase/mycolyltransferase Ag85C (fbpC) from Mycobacterium bovis (strain ATCC BAA-935 / AF2122/97).